A 794-amino-acid chain; its full sequence is K(+)-insensitive pyrophosphate-energized proton pump (794 aa).

Helical transmembrane passes span 20–40 (ALVA…GVLV), 74–94 (TLGV…ADDW), 102–122 (IFFL…MWLA), 163–183 (GVVG…VVLV), and 194–214 (GFGL…GIFT). Position 215 (Lys-215) interacts with substrate. Mg(2+) is bound by residues Asp-218, Asp-222, Asn-245, and Asp-248. 6 consecutive transmembrane segments (helical) span residues 264 to 284 (YAVT…DFGL), 285 to 305 (AFPL…IFAV), 321 to 341 (GFFI…FVYL), 365 to 385 (ILAL…QQLT), 422 to 442 (AVYT…LGGT), and 446 to 466 (LALF…GVIV). Asp-476 contacts Mg(2+). A run of 3 helical transmembrane segments spans residues 508–528 (AITK…LFGS), 564–584 (VGLI…INAV), and 641–661 (IFIG…GAIG). Residues Asp-678, Asp-704, and Asp-708 each contribute to the Ca(2+) site. A substrate-binding site is contributed by Lys-711. 2 consecutive transmembrane segments (helical) span residues 717–737 (AINP…PAVI) and 747–767 (VVVR…AVYV).

The protein belongs to the H(+)-translocating pyrophosphatase (TC 3.A.10) family. K(+)-insensitive subfamily. Homodimer. It depends on Mg(2+) as a cofactor.

The protein resides in the cell membrane. The enzyme catalyses diphosphate + H2O + H(+)(in) = 2 phosphate + 2 H(+)(out). Functionally, proton pump that utilizes the energy of pyrophosphate hydrolysis as the driving force for proton movement across the membrane. Generates a proton motive force. This chain is K(+)-insensitive pyrophosphate-energized proton pump, found in Streptomyces coelicolor (strain ATCC BAA-471 / A3(2) / M145).